A 368-amino-acid chain; its full sequence is 3-dehydroquinate synthase (368 aa).

Residues 71–76 (DGEAAK), 105–109 (GATTD), 129–130 (TT), Lys-142, and Lys-151 contribute to the NAD(+) site. Residues Glu-184, His-247, and His-263 each coordinate Zn(2+).

Belongs to the sugar phosphate cyclases superfamily. Dehydroquinate synthase family. It depends on Co(2+) as a cofactor. The cofactor is Zn(2+). NAD(+) serves as cofactor.

It is found in the cytoplasm. The enzyme catalyses 7-phospho-2-dehydro-3-deoxy-D-arabino-heptonate = 3-dehydroquinate + phosphate. It participates in metabolic intermediate biosynthesis; chorismate biosynthesis; chorismate from D-erythrose 4-phosphate and phosphoenolpyruvate: step 2/7. Functionally, catalyzes the conversion of 3-deoxy-D-arabino-heptulosonate 7-phosphate (DAHP) to dehydroquinate (DHQ). This Thermobifida fusca (strain YX) protein is 3-dehydroquinate synthase.